The sequence spans 350 residues: Glyceraldehyde-3-phosphate dehydrogenase (350 aa).

NAD(+) is bound by residues 10–11, Asp36, Arg82, and Ser125; that span reads RI. D-glyceraldehyde 3-phosphate-binding positions include 161–163, Thr193, 222–223, and Arg245; these read SCT and TG. The active-site Nucleophile is the Cys162. Asn331 is a binding site for NAD(+).

Belongs to the glyceraldehyde-3-phosphate dehydrogenase family. As to quaternary structure, homotetramer.

It is found in the cytoplasm. The enzyme catalyses D-glyceraldehyde 3-phosphate + phosphate + NAD(+) = (2R)-3-phospho-glyceroyl phosphate + NADH + H(+). It participates in carbohydrate degradation; glycolysis; pyruvate from D-glyceraldehyde 3-phosphate: step 1/5. Functionally, catalyzes the oxidative phosphorylation of glyceraldehyde 3-phosphate (G3P) to 1,3-bisphosphoglycerate (BPG) using the cofactor NAD. The first reaction step involves the formation of a hemiacetal intermediate between G3P and a cysteine residue, and this hemiacetal intermediate is then oxidized to a thioester, with concomitant reduction of NAD to NADH. The reduced NADH is then exchanged with the second NAD, and the thioester is attacked by a nucleophilic inorganic phosphate to produce BPG. The protein is Glyceraldehyde-3-phosphate dehydrogenase (gap) of Treponema pallidum (strain Nichols).